Here is a 53-residue protein sequence, read N- to C-terminus: ATP synthase protein 8 (53 aa).

Residues 10 to 30 traverse the membrane as a helical segment; it reads IMVFLVSMALLWAIMTMVFFL.

It belongs to the ATPase protein 8 family. F-type ATPases have 2 components, CF(1) - the catalytic core - and CF(0) - the membrane proton channel.

It localises to the mitochondrion membrane. In terms of biological role, mitochondrial membrane ATP synthase (F(1)F(0) ATP synthase or Complex V) produces ATP from ADP in the presence of a proton gradient across the membrane which is generated by electron transport complexes of the respiratory chain. F-type ATPases consist of two structural domains, F(1) - containing the extramembraneous catalytic core and F(0) - containing the membrane proton channel, linked together by a central stalk and a peripheral stalk. During catalysis, ATP synthesis in the catalytic domain of F(1) is coupled via a rotary mechanism of the central stalk subunits to proton translocation. Part of the complex F(0) domain. Minor subunit located with subunit a in the membrane. The chain is ATP synthase protein 8 (MT-ATP8) from Artemia franciscana (Brine shrimp).